Consider the following 302-residue polypeptide: Nucleotide-binding protein BceJ2315_08000 (302 aa).

8 to 15 (GISGSGKS) lines the ATP pocket. 57–60 (DARS) contacts GTP.

It belongs to the RapZ-like family.

Functionally, displays ATPase and GTPase activities. The protein is Nucleotide-binding protein BceJ2315_08000 of Burkholderia cenocepacia (strain ATCC BAA-245 / DSM 16553 / LMG 16656 / NCTC 13227 / J2315 / CF5610) (Burkholderia cepacia (strain J2315)).